Reading from the N-terminus, the 146-residue chain is Hemoglobin subunit beta (146 aa).

One can recognise a Globin domain in the interval 2 to 146; it reads HWSAEEKQLI…VAHALARKYH (145 aa). Heme b is bound by residues His-63 and His-92.

This sequence belongs to the globin family. Heterotetramer of two alpha chains and two beta chains. In terms of tissue distribution, red blood cells.

Its function is as follows. Involved in oxygen transport from the lung to the various peripheral tissues. The protein is Hemoglobin subunit beta (HBB) of Phasianus colchicus colchicus (Black-necked pheasant).